Consider the following 203-residue polypeptide: Superoxide dismutase [Mn] (203 aa).

Positions 27, 81, 167, and 171 each coordinate Mn(2+).

This sequence belongs to the iron/manganese superoxide dismutase family. In terms of assembly, homodimer. Mn(2+) is required as a cofactor.

It catalyses the reaction 2 superoxide + 2 H(+) = H2O2 + O2. Functionally, destroys superoxide anion radicals which are normally produced within the cells and which are toxic to biological systems. The chain is Superoxide dismutase [Mn] (sodA) from Buchnera aphidicola subsp. Acyrthosiphon pisum (strain APS) (Acyrthosiphon pisum symbiotic bacterium).